A 759-amino-acid polypeptide reads, in one-letter code: Phosphoribosylformylglycinamidine synthase subunit PurL (759 aa).

Residue His48 is part of the active site. Residues Tyr51 and Lys91 each coordinate ATP. Glu93 is a Mg(2+) binding site. Substrate-binding positions include Ser94 to His97 and Arg116. The active-site Proton acceptor is the His95. Asp117 lines the Mg(2+) pocket. A substrate-binding site is contributed by Gln240. A Mg(2+)-binding site is contributed by Asp268. Residue Glu317–Gln319 coordinates substrate. The ATP site is built by Asn501 and Gly538. Mg(2+) is bound at residue Asn539. Residue Ser541 coordinates substrate.

Belongs to the FGAMS family. As to quaternary structure, monomer. Part of the FGAM synthase complex composed of 1 PurL, 1 PurQ and 2 PurS subunits.

The protein localises to the cytoplasm. The catalysed reaction is N(2)-formyl-N(1)-(5-phospho-beta-D-ribosyl)glycinamide + L-glutamine + ATP + H2O = 2-formamido-N(1)-(5-O-phospho-beta-D-ribosyl)acetamidine + L-glutamate + ADP + phosphate + H(+). The protein operates within purine metabolism; IMP biosynthesis via de novo pathway; 5-amino-1-(5-phospho-D-ribosyl)imidazole from N(2)-formyl-N(1)-(5-phospho-D-ribosyl)glycinamide: step 1/2. Its function is as follows. Part of the phosphoribosylformylglycinamidine synthase complex involved in the purines biosynthetic pathway. Catalyzes the ATP-dependent conversion of formylglycinamide ribonucleotide (FGAR) and glutamine to yield formylglycinamidine ribonucleotide (FGAM) and glutamate. The FGAM synthase complex is composed of three subunits. PurQ produces an ammonia molecule by converting glutamine to glutamate. PurL transfers the ammonia molecule to FGAR to form FGAM in an ATP-dependent manner. PurS interacts with PurQ and PurL and is thought to assist in the transfer of the ammonia molecule from PurQ to PurL. The chain is Phosphoribosylformylglycinamidine synthase subunit PurL from Chlorobaculum tepidum (strain ATCC 49652 / DSM 12025 / NBRC 103806 / TLS) (Chlorobium tepidum).